A 146-amino-acid chain; its full sequence is Large ribosomal subunit protein bL19 (146 aa).

Residues aspartate 119–glutamate 146 are disordered.

It belongs to the bacterial ribosomal protein bL19 family.

This protein is located at the 30S-50S ribosomal subunit interface and may play a role in the structure and function of the aminoacyl-tRNA binding site. This Bartonella tribocorum (strain CIP 105476 / IBS 506) protein is Large ribosomal subunit protein bL19.